The sequence spans 1322 residues: WD repeat-containing protein 17 (1322 aa).

WD repeat units lie at residues 81–121 (EHKK…VIAK), 123–164 (DSTK…SGVI), 171–211 (SFLS…QKHV), 221–261 (DEED…CITT), and 266–307 (SAAA…PIDN). Residues 328-352 (KFSVQSPTKNHYTSSTSEAVPPPTL) are disordered. A compositionally biased stretch (polar residues) spans 330 to 345 (SVQSPTKNHYTSSTSE). 7 WD repeats span residues 391 to 431 (GHVE…AVYT), 434 to 474 (GNEG…IIQR), 478 to 518 (HGTN…LHKY), 519 to 559 (KHPA…DQPL), 564 to 604 (GHTA…CINI), 607 to 647 (GHTA…CVDT), and 650 to 690 (DHGA…TPVQ).

This Homo sapiens (Human) protein is WD repeat-containing protein 17 (WDR17).